The primary structure comprises 147 residues: MNNILVINGPNLNLLGKREPDIYGNITLENINQKIKLHFKNEDLKIDFFQSNEEGKIIDKIIESEKKYNAIVINPAAYSHYSIAILDAMRSINIPVVEVHLSNIYKREEYRKKSVTAEASLGVISGFGYYGYIMAIEFILNNLVREK.

The active-site Proton acceptor is Tyr-23. Substrate-binding residues include Asn-74, His-80, and Asp-87. His-100 serves as the catalytic Proton donor. Residues 101 to 102 (LS) and Arg-111 each bind substrate.

Belongs to the type-II 3-dehydroquinase family. In terms of assembly, homododecamer.

The catalysed reaction is 3-dehydroquinate = 3-dehydroshikimate + H2O. It functions in the pathway metabolic intermediate biosynthesis; chorismate biosynthesis; chorismate from D-erythrose 4-phosphate and phosphoenolpyruvate: step 3/7. In terms of biological role, catalyzes a trans-dehydration via an enolate intermediate. This is 3-dehydroquinate dehydratase from Clostridium botulinum (strain Kyoto / Type A2).